We begin with the raw amino-acid sequence, 199 residues long: ATP-dependent Clp protease proteolytic subunit (199 aa).

Ser97 (nucleophile) is an active-site residue. His122 is a catalytic residue.

It belongs to the peptidase S14 family. In terms of assembly, fourteen ClpP subunits assemble into 2 heptameric rings which stack back to back to give a disk-like structure with a central cavity, resembling the structure of eukaryotic proteasomes.

It is found in the cytoplasm. The catalysed reaction is Hydrolysis of proteins to small peptides in the presence of ATP and magnesium. alpha-casein is the usual test substrate. In the absence of ATP, only oligopeptides shorter than five residues are hydrolyzed (such as succinyl-Leu-Tyr-|-NHMec, and Leu-Tyr-Leu-|-Tyr-Trp, in which cleavage of the -Tyr-|-Leu- and -Tyr-|-Trp bonds also occurs).. Cleaves peptides in various proteins in a process that requires ATP hydrolysis. Has a chymotrypsin-like activity. Plays a major role in the degradation of misfolded proteins. This is ATP-dependent Clp protease proteolytic subunit from Pelobacter propionicus (strain DSM 2379 / NBRC 103807 / OttBd1).